The chain runs to 194 residues: Protein phosphatase 1 regulatory subunit 1B (194 aa).

Residue Met1 is modified to N-acetylmethionine. A disordered region spans residues 1 to 194 (MDPKDRKKIQ…GEEPQHPSPP (194 aa)). A Phosphothreonine; by PKA modification is found at Thr34. Positions 41-63 (VSEHSSPEEEASPHQRTSGEGHH) are enriched in basic and acidic residues. Residues Ser45 and Ser46 each carry the phosphoserine modification. Thr75 carries the phosphothreonine modification. The segment covering 84–95 (HLQTISNLSENQ) has biased composition (polar residues). Phosphoserine is present on residues Ser97 and Ser130. Positions 113 to 131 (QEDDEEDEDEEEDEEEDSQ) are enriched in acidic residues. A compositionally biased stretch (basic and acidic residues) spans 160-170 (PPLDEPQRDGN). Ser192 carries the phosphoserine modification.

The protein belongs to the protein phosphatase inhibitor 1 family. Post-translationally, dopamine- and cyclic AMP-regulated neuronal phosphoprotein. In terms of processing, phosphorylation of Thr-34 is required for activity.

It is found in the cytoplasm. Its function is as follows. Inhibitor of protein-phosphatase 1. This chain is Protein phosphatase 1 regulatory subunit 1B (Ppp1r1b), found in Mus musculus (Mouse).